We begin with the raw amino-acid sequence, 305 residues long: UDP-3-O-acyl-N-acetylglucosamine deacetylase (305 aa).

Zn(2+) contacts are provided by histidine 78, histidine 237, and aspartate 241. Catalysis depends on histidine 264, which acts as the Proton donor.

This sequence belongs to the LpxC family. The cofactor is Zn(2+).

The catalysed reaction is a UDP-3-O-[(3R)-3-hydroxyacyl]-N-acetyl-alpha-D-glucosamine + H2O = a UDP-3-O-[(3R)-3-hydroxyacyl]-alpha-D-glucosamine + acetate. The protein operates within glycolipid biosynthesis; lipid IV(A) biosynthesis; lipid IV(A) from (3R)-3-hydroxytetradecanoyl-[acyl-carrier-protein] and UDP-N-acetyl-alpha-D-glucosamine: step 2/6. In terms of biological role, catalyzes the hydrolysis of UDP-3-O-myristoyl-N-acetylglucosamine to form UDP-3-O-myristoylglucosamine and acetate, the committed step in lipid A biosynthesis. This chain is UDP-3-O-acyl-N-acetylglucosamine deacetylase, found in Paraburkholderia phymatum (strain DSM 17167 / CIP 108236 / LMG 21445 / STM815) (Burkholderia phymatum).